A 315-amino-acid polypeptide reads, in one-letter code: Prephenate dehydratase (315 aa).

One can recognise a Prephenate dehydratase domain in the interval arginine 3–arginine 190. In terms of domain architecture, ACT spans serine 204–proline 281.

Homodimer.

It carries out the reaction prephenate + H(+) = 3-phenylpyruvate + CO2 + H2O. Its pathway is amino-acid biosynthesis; L-phenylalanine biosynthesis; phenylpyruvate from prephenate: step 1/1. This chain is Prephenate dehydratase (pheA), found in Mycobacterium sp. (strain JLS).